Here is a 293-residue protein sequence, read N- to C-terminus: Signal recognition particle receptor FtsY (293 aa).

Residues 93 to 100 (GVNGAGKT), 175 to 179 (DTAGR), and 239 to 242 (TKLD) each bind GTP.

This sequence belongs to the GTP-binding SRP family. FtsY subfamily. As to quaternary structure, part of the signal recognition particle protein translocation system, which is composed of SRP and FtsY. SRP is a ribonucleoprotein composed of Ffh and a 4.5S RNA molecule.

The protein resides in the cell inner membrane. Its subcellular location is the cytoplasm. The catalysed reaction is GTP + H2O = GDP + phosphate + H(+). Its function is as follows. Involved in targeting and insertion of nascent membrane proteins into the cytoplasmic membrane. Acts as a receptor for the complex formed by the signal recognition particle (SRP) and the ribosome-nascent chain (RNC). Interaction with SRP-RNC leads to the transfer of the RNC complex to the Sec translocase for insertion into the membrane, the hydrolysis of GTP by both Ffh and FtsY, and the dissociation of the SRP-FtsY complex into the individual components. The protein is Signal recognition particle receptor FtsY of Helicobacter pylori (strain ATCC 700392 / 26695) (Campylobacter pylori).